The chain runs to 418 residues: Glutamyl-tRNA reductase (418 aa).

Substrate is bound by residues 49-52 (TCNR), Ser-109, 114-116 (EPQ), and Gln-120. Cys-50 acts as the Nucleophile in catalysis. NADP(+) is bound at residue 189–194 (GAGETI).

Belongs to the glutamyl-tRNA reductase family. As to quaternary structure, homodimer.

It catalyses the reaction (S)-4-amino-5-oxopentanoate + tRNA(Glu) + NADP(+) = L-glutamyl-tRNA(Glu) + NADPH + H(+). The protein operates within porphyrin-containing compound metabolism; protoporphyrin-IX biosynthesis; 5-aminolevulinate from L-glutamyl-tRNA(Glu): step 1/2. Functionally, catalyzes the NADPH-dependent reduction of glutamyl-tRNA(Glu) to glutamate 1-semialdehyde (GSA). In Pectobacterium atrosepticum (strain SCRI 1043 / ATCC BAA-672) (Erwinia carotovora subsp. atroseptica), this protein is Glutamyl-tRNA reductase.